We begin with the raw amino-acid sequence, 319 residues long: 4-hydroxy-3-methylbut-2-enyl diphosphate reductase (319 aa).

[4Fe-4S] cluster is bound at residue Cys-18. Positions 47 and 81 each coordinate (2E)-4-hydroxy-3-methylbut-2-enyl diphosphate. Residues His-47 and His-81 each coordinate dimethylallyl diphosphate. His-47 and His-81 together coordinate isopentenyl diphosphate. Cys-103 provides a ligand contact to [4Fe-4S] cluster. His-131 is a binding site for (2E)-4-hydroxy-3-methylbut-2-enyl diphosphate. A dimethylallyl diphosphate-binding site is contributed by His-131. An isopentenyl diphosphate-binding site is contributed by His-131. Glu-133 serves as the catalytic Proton donor. Residue Thr-172 participates in (2E)-4-hydroxy-3-methylbut-2-enyl diphosphate binding. Cys-202 contributes to the [4Fe-4S] cluster binding site. Ser-230, Ser-231, Asn-232, and Ser-275 together coordinate (2E)-4-hydroxy-3-methylbut-2-enyl diphosphate. 4 residues coordinate dimethylallyl diphosphate: Ser-230, Ser-231, Asn-232, and Ser-275. 4 residues coordinate isopentenyl diphosphate: Ser-230, Ser-231, Asn-232, and Ser-275.

Belongs to the IspH family. The cofactor is [4Fe-4S] cluster.

The catalysed reaction is isopentenyl diphosphate + 2 oxidized [2Fe-2S]-[ferredoxin] + H2O = (2E)-4-hydroxy-3-methylbut-2-enyl diphosphate + 2 reduced [2Fe-2S]-[ferredoxin] + 2 H(+). It carries out the reaction dimethylallyl diphosphate + 2 oxidized [2Fe-2S]-[ferredoxin] + H2O = (2E)-4-hydroxy-3-methylbut-2-enyl diphosphate + 2 reduced [2Fe-2S]-[ferredoxin] + 2 H(+). The protein operates within isoprenoid biosynthesis; dimethylallyl diphosphate biosynthesis; dimethylallyl diphosphate from (2E)-4-hydroxy-3-methylbutenyl diphosphate: step 1/1. It functions in the pathway isoprenoid biosynthesis; isopentenyl diphosphate biosynthesis via DXP pathway; isopentenyl diphosphate from 1-deoxy-D-xylulose 5-phosphate: step 6/6. Catalyzes the conversion of 1-hydroxy-2-methyl-2-(E)-butenyl 4-diphosphate (HMBPP) into a mixture of isopentenyl diphosphate (IPP) and dimethylallyl diphosphate (DMAPP). Acts in the terminal step of the DOXP/MEP pathway for isoprenoid precursor biosynthesis. The protein is 4-hydroxy-3-methylbut-2-enyl diphosphate reductase of Beijerinckia indica subsp. indica (strain ATCC 9039 / DSM 1715 / NCIMB 8712).